Reading from the N-terminus, the 446-residue chain is Bifunctional protein GlmU (446 aa).

Positions 1 to 226 (MLAVAILAAG…PDEVNGINDR (226 aa)) are pyrophosphorylase. UDP-N-acetyl-alpha-D-glucosamine-binding positions include 7 to 10 (LAAG), Lys21, Gln73, and 78 to 79 (GT). Asp103 is a binding site for Mg(2+). Gly140, Glu155, Asn170, and Asn224 together coordinate UDP-N-acetyl-alpha-D-glucosamine. Asn224 is a Mg(2+) binding site. The segment at 227-247 (CQLANCEALLQERLRNYWMKE) is linker. An N-acetyltransferase region spans residues 248–446 (GVTFTDPASC…SKQLIKNGWQ (199 aa)). UDP-N-acetyl-alpha-D-glucosamine contacts are provided by Arg329 and Lys347. His359 functions as the Proton acceptor in the catalytic mechanism. UDP-N-acetyl-alpha-D-glucosamine is bound by residues Tyr362 and Asn373. Acetyl-CoA contacts are provided by residues Ala376, 382-383 (NY), Ala419, and Arg436.

It in the N-terminal section; belongs to the N-acetylglucosamine-1-phosphate uridyltransferase family. The protein in the C-terminal section; belongs to the transferase hexapeptide repeat family. As to quaternary structure, homotrimer. It depends on Mg(2+) as a cofactor.

It is found in the cytoplasm. It carries out the reaction alpha-D-glucosamine 1-phosphate + acetyl-CoA = N-acetyl-alpha-D-glucosamine 1-phosphate + CoA + H(+). The catalysed reaction is N-acetyl-alpha-D-glucosamine 1-phosphate + UTP + H(+) = UDP-N-acetyl-alpha-D-glucosamine + diphosphate. It functions in the pathway nucleotide-sugar biosynthesis; UDP-N-acetyl-alpha-D-glucosamine biosynthesis; N-acetyl-alpha-D-glucosamine 1-phosphate from alpha-D-glucosamine 6-phosphate (route II): step 2/2. The protein operates within nucleotide-sugar biosynthesis; UDP-N-acetyl-alpha-D-glucosamine biosynthesis; UDP-N-acetyl-alpha-D-glucosamine from N-acetyl-alpha-D-glucosamine 1-phosphate: step 1/1. Its pathway is bacterial outer membrane biogenesis; LPS lipid A biosynthesis. Catalyzes the last two sequential reactions in the de novo biosynthetic pathway for UDP-N-acetylglucosamine (UDP-GlcNAc). The C-terminal domain catalyzes the transfer of acetyl group from acetyl coenzyme A to glucosamine-1-phosphate (GlcN-1-P) to produce N-acetylglucosamine-1-phosphate (GlcNAc-1-P), which is converted into UDP-GlcNAc by the transfer of uridine 5-monophosphate (from uridine 5-triphosphate), a reaction catalyzed by the N-terminal domain. The sequence is that of Bifunctional protein GlmU from Prochlorococcus marinus (strain MIT 9313).